The following is a 409-amino-acid chain: Accessory Sec system protein translocase subunit SecY2 (409 aa).

The next 10 membrane-spanning stretches (helical) occupy residues 16-36 (ILIT…PIPG), 61-81 (LSQV…MILL), 104-124 (VVML…FQYH), 132-152 (LLLA…IGNL), 161-181 (MTIL…PLIF), 190-210 (LAII…ITFE), 242-262 (GMAF…IILL), 286-306 (GVVI…FVNI), 341-361 (LFGT…LLFA), and 374-394 (TGIF…FQVI).

Belongs to the SecY/SEC61-alpha family. SecY2 subfamily. In terms of assembly, component of the accessory SecA2/SecY2 protein translocase complex required to export cell wall proteins. May form heterotrimers with SecE and SecG subunits.

Its subcellular location is the cell membrane. Its function is as follows. Part of the accessory SecA2/SecY2 system specifically required for export of possible cell wall proteins. The central subunit of a protein translocation channel. This is Accessory Sec system protein translocase subunit SecY2 from Streptococcus agalactiae serotype III (strain NEM316).